The primary structure comprises 497 residues: Serine hydroxymethyltransferase (497 aa).

(6S)-5,6,7,8-tetrahydrofolate contacts are provided by residues L176 and 180 to 182 (GHL). K289 is modified (N6-(pyridoxal phosphate)lysine). E306 is a binding site for (6S)-5,6,7,8-tetrahydrofolate.

It belongs to the SHMT family. Homodimer. Pyridoxal 5'-phosphate is required as a cofactor.

The protein resides in the cytoplasm. The enzyme catalyses (6R)-5,10-methylene-5,6,7,8-tetrahydrofolate + glycine + H2O = (6S)-5,6,7,8-tetrahydrofolate + L-serine. The protein operates within one-carbon metabolism; tetrahydrofolate interconversion. Its pathway is amino-acid biosynthesis; glycine biosynthesis; glycine from L-serine: step 1/1. Catalyzes the reversible interconversion of serine and glycine with tetrahydrofolate (THF) serving as the one-carbon carrier. This reaction serves as the major source of one-carbon groups required for the biosynthesis of purines, thymidylate, methionine, and other important biomolecules. Also exhibits THF-independent aldolase activity toward beta-hydroxyamino acids, producing glycine and aldehydes, via a retro-aldol mechanism. In Chlamydia pneumoniae (Chlamydophila pneumoniae), this protein is Serine hydroxymethyltransferase.